The chain runs to 538 residues: MKWLKGIGLALIPFNLHDYPIALTLGCYLLSCAVIFYTDRFALPARERRKNAPKYGRNRDRIDRLARLPVIALVFAGFFAISWRPLYAAAGTMSFFIIFTGISRAKFKFIREPLVFSDIALVADVFKYKTIFYASSLNIVFWIVAFLYVFGVSALYMYFEPTILPERSRLFWVLVMVGIAAGPWGLLFYGPVNRPTAALVQRLVKAINVKMNTVRFGTFASVVFHFIIWLGVKRDKIVAELSEILRAAVHDLIGHEEAPLIIVWQSESFIDMRHFGVDSIKLPTVDRLRKQAVQWGRLSNVFEGGYTLRTEFAVLSGLVPDDIHVDASYPYLRAAHYADIVWPGKLKRAGWRTHFIHPYDRTFFLRHKAMPLLGFEKLTMLDAFDHKPERDGLYVSDATLAARVLAEVEKLPEEESGFFFVASMANHGPWEPGRVGTLTNPVDIYLAILEQSDAALKQLIDGLNKLDRPVWFVFYGDHAPLLKSFADPFPDPRTDYFIVPLAKARAAAHSPKRAKDEDPWNLLGSMLKHANLHKDALQ.

The next 6 helical transmembrane spans lie at leucine 16–phenylalanine 36, valine 70–alanine 90, leucine 114–alanine 134, isoleucine 139–phenylalanine 159, leucine 170–glycine 190, and asparagine 212–valine 232.

The protein resides in the cell membrane. Its pathway is capsule biogenesis; capsule polysaccharide biosynthesis. Involved in antigen K (capsular polysaccharide) biosynthesis. The sequence is that of Capsular polysaccharide biosynthesis protein RkpI (rkpI) from Rhizobium meliloti (strain 1021) (Ensifer meliloti).